A 1029-amino-acid polypeptide reads, in one-letter code: Beta-galactosidase 2 (1029 aa).

Residues Asn-104 and Asp-203 each coordinate substrate. Position 203 (Asp-203) interacts with Na(+). Mg(2+) is bound by residues Glu-418, His-420, and Glu-463. Residues Glu-463 and 539-542 (EYAH) contribute to the substrate site. Glu-463 acts as the Proton donor in catalysis. The active-site Nucleophile is the Glu-539. Mg(2+) is bound at residue Asn-599. 2 residues coordinate Na(+): Phe-603 and Asn-606. Substrate contacts are provided by Asn-606 and Trp-1004.

Belongs to the glycosyl hydrolase 2 family. As to quaternary structure, homotetramer. Requires Mg(2+) as cofactor. The cofactor is Na(+).

The catalysed reaction is Hydrolysis of terminal non-reducing beta-D-galactose residues in beta-D-galactosides.. The polypeptide is Beta-galactosidase 2 (Enterobacter cloacae).